A 59-amino-acid chain; its full sequence is ATP synthase subunit J, mitochondrial (59 aa).

The chain crosses the membrane as a helical span at residues 9 to 25 (ILKVYWPFFVAGAAVYY).

This sequence belongs to the ATPase j subunit family. In terms of assembly, F-type ATPases have 2 components, CF(1) - the catalytic core - and CF(0) - the membrane proton channel. In yeast, the dimeric form of ATP synthase consists of 17 polypeptides: alpha, beta, gamma, delta, epsilon, 4 (B), 5 (OSCP), 6 (A), 8, 9 (C), d, E (Tim11), f, g, h, i/j and k.

It is found in the mitochondrion membrane. Mitochondrial membrane ATP synthase (F(1)F(0) ATP synthase or Complex V) produces ATP from ADP in the presence of a proton gradient across the membrane which is generated by electron transport complexes of the respiratory chain. F-type ATPases consist of two structural domains, F(1) - containing the extramembraneous catalytic core and F(0) - containing the membrane proton channel, linked together by a central stalk and a peripheral stalk. During catalysis, ATP synthesis in the catalytic domain of F(1) is coupled via a rotary mechanism of the central stalk subunits to proton translocation. Part of the complex F(0) domain. Minor subunit located with subunit a in the membrane. The sequence is that of ATP synthase subunit J, mitochondrial (ATP18) from Saccharomyces cerevisiae (strain ATCC 204508 / S288c) (Baker's yeast).